Consider the following 242-residue polypeptide: Proteasome subunit alpha (242 aa).

This sequence belongs to the peptidase T1A family. The 20S proteasome core is composed of 14 alpha and 14 beta subunits that assemble into four stacked heptameric rings, resulting in a barrel-shaped structure. The two inner rings, each composed of seven catalytic beta subunits, are sandwiched by two outer rings, each composed of seven alpha subunits. The catalytic chamber with the active sites is on the inside of the barrel. Has a gated structure, the ends of the cylinder being occluded by the N-termini of the alpha-subunits. Is capped at one or both ends by the proteasome regulatory ATPase, PAN.

The protein resides in the cytoplasm. Its activity is regulated as follows. The formation of the proteasomal ATPase PAN-20S proteasome complex, via the docking of the C-termini of PAN into the intersubunit pockets in the alpha-rings, triggers opening of the gate for substrate entry. Interconversion between the open-gate and close-gate conformations leads to a dynamic regulation of the 20S proteasome proteolysis activity. In terms of biological role, component of the proteasome core, a large protease complex with broad specificity involved in protein degradation. This Sulfolobus acidocaldarius (strain ATCC 33909 / DSM 639 / JCM 8929 / NBRC 15157 / NCIMB 11770) protein is Proteasome subunit alpha.